The chain runs to 424 residues: MNEQRFFRFLRERIGLDVESVGAPMVERALRQRCVAAGAMDLDDYWLRLQQSADEQQALIEAVIVPETWFFRYPESFTALASLAHKRLAQLAGARPLRLLSLPCSTGEEPYSLAMALFDAGMAPGAFLVDGMDISPSSVAKAGQAVYGRNAFRGSELGFRERYFDALDEGHRLHERVRQQVSLRVGNVLDPALASRDGLYDFVFCRNLLIYFDVPTQQRVFEVLKRLLHPQGVLFIGPAEGSLLARMGMRPLGIAQSFAYVRHEGDSAPLAAAPAQTAKRAFTTLPAPVYPQPSVPLPRSRRVLPVAARPARAREHSHEGASELLAGIARLANAGASEQARSECQRYLSQYPPSAQVYYWLGLLSDTEGDAQQALSHYRKALYLEPQHPEALVHLAALLAAQGDLAGARRLQERAARAGRESER.

The CheR-type methyltransferase domain maps to 1 to 263 (MNEQRFFRFL…IAQSFAYVRH (263 aa)). S-adenosyl-L-methionine is bound by residues T68, R72, E109, D133, 187–188 (NV), and 206–207 (RN). The stretch at 355-388 (AQVYYWLGLLSDTEGDAQQALSHYRKALYLEPQH) is one TPR repeat.

In terms of assembly, monomer. The TPR repeat does not mediate self-association.

Involved in biofilm formation. The sequence is that of Probable biofilm formation methyltransferase WspC (wspC) from Pseudomonas putida (strain ATCC 47054 / DSM 6125 / CFBP 8728 / NCIMB 11950 / KT2440).